The chain runs to 236 residues: Flagellar L-ring protein (236 aa).

The first 24 residues, 1–24 (MKNKNRLNTIKLLSISLLIAVTTA), serve as a signal peptide directing secretion. Cys-25 is lipidated: N-palmitoyl cysteine. Cys-25 is lipidated: S-diacylglycerol cysteine.

This sequence belongs to the FlgH family. The basal body constitutes a major portion of the flagellar organelle and consists of four rings (L,P,S, and M) mounted on a central rod.

The protein resides in the cell outer membrane. Its subcellular location is the bacterial flagellum basal body. Functionally, assembles around the rod to form the L-ring and probably protects the motor/basal body from shearing forces during rotation. This chain is Flagellar L-ring protein, found in Colwellia psychrerythraea (strain 34H / ATCC BAA-681) (Vibrio psychroerythus).